The following is a 218-amino-acid chain: NAD(P)H-quinone oxidoreductase subunit I (218 aa).

2 4Fe-4S ferredoxin-type domains span residues 55-84 (GRIH…VDWV) and 95-124 (RNYS…MTEE). [4Fe-4S] cluster is bound by residues Cys64, Cys67, Cys70, Cys74, Cys104, Cys107, Cys110, and Cys114. A disordered region spans residues 192 to 218 (LSLQQDSLQGDEGESLQDAPDQDQPKG).

Belongs to the complex I 23 kDa subunit family. In terms of assembly, NDH-1 is composed of at least 11 different subunits. Requires [4Fe-4S] cluster as cofactor.

The protein localises to the cellular thylakoid membrane. The catalysed reaction is a plastoquinone + NADH + (n+1) H(+)(in) = a plastoquinol + NAD(+) + n H(+)(out). It catalyses the reaction a plastoquinone + NADPH + (n+1) H(+)(in) = a plastoquinol + NADP(+) + n H(+)(out). In terms of biological role, NDH-1 shuttles electrons from an unknown electron donor, via FMN and iron-sulfur (Fe-S) centers, to quinones in the respiratory and/or the photosynthetic chain. The immediate electron acceptor for the enzyme in this species is believed to be plastoquinone. Couples the redox reaction to proton translocation, and thus conserves the redox energy in a proton gradient. The protein is NAD(P)H-quinone oxidoreductase subunit I of Prochlorococcus marinus (strain MIT 9303).